Here is a 388-residue protein sequence, read N- to C-terminus: tRNA (guanine(26)-N(2))-dimethyltransferase (388 aa).

A Trm1 methyltransferase domain is found at 7 to 381 (KTVEEGLTKI…APLKKIKEII (375 aa)). The S-adenosyl-L-methionine site is built by arginine 40, arginine 70, aspartate 88, aspartate 115, and alanine 116. Zn(2+) contacts are provided by cysteine 248, cysteine 251, cysteine 268, and cysteine 271.

It belongs to the class I-like SAM-binding methyltransferase superfamily. Trm1 family.

It catalyses the reaction guanosine(26) in tRNA + 2 S-adenosyl-L-methionine = N(2)-dimethylguanosine(26) in tRNA + 2 S-adenosyl-L-homocysteine + 2 H(+). Functionally, dimethylates a single guanine residue at position 26 of a number of tRNAs using S-adenosyl-L-methionine as donor of the methyl groups. The polypeptide is tRNA (guanine(26)-N(2))-dimethyltransferase (Methanobrevibacter smithii (strain ATCC 35061 / DSM 861 / OCM 144 / PS)).